Consider the following 291-residue polypeptide: ATP synthase subunit a (291 aa).

The next 6 membrane-spanning stretches (helical) occupy residues 50–70 (LDSM…FWIV), 108–128 (IAPL…MDLI), 161–181 (DPNI…FYSI), 203–223 (PVAK…TFLA), 241–261 (LIFI…SVPW), and 262–282 (AIFH…LTIV).

Belongs to the ATPase A chain family. In terms of assembly, F-type ATPases have 2 components, CF(1) - the catalytic core - and CF(0) - the membrane proton channel. CF(1) has five subunits: alpha(3), beta(3), gamma(1), delta(1), epsilon(1). CF(0) has three main subunits: a(1), b(2) and c(9-12). The alpha and beta chains form an alternating ring which encloses part of the gamma chain. CF(1) is attached to CF(0) by a central stalk formed by the gamma and epsilon chains, while a peripheral stalk is formed by the delta and b chains.

The protein localises to the cell inner membrane. In terms of biological role, key component of the proton channel; it plays a direct role in the translocation of protons across the membrane. The sequence is that of ATP synthase subunit a from Acinetobacter baumannii (strain SDF).